We begin with the raw amino-acid sequence, 340 residues long: Mitochondrial calcium uniporter regulator 1 (340 aa).

The segment at 1 to 44 (MDSGSVAAERPRRTPSRQRLPSSGCGVPARPGVSTLPGGRSWLR) is disordered. At 1 to 54 (MDSGSVAAERPRRTPSRQRLPSSGCGVPARPGVSTLPGGRSWLRPRGRAARASP) the chain is on the mitochondrial intermembrane side. Residues 55–74 (LLFLLLVPSPRLAATATATA) traverse the membrane as a helical segment. At 75–316 (PRRTLAERSR…KTMLEAHKLD (242 aa)) the chain is on the mitochondrial matrix side. The stretch at 197 to 291 (ALQQVLSKIA…VSLHAQQDRA (95 aa)) forms a coiled coil. An N6-acetyllysine modification is found at lysine 204. The chain crosses the membrane as a helical span at residues 317-339 (TIKYLAGSVFTCLTVALGFYRLW). Isoleucine 340 is a topological domain (mitochondrial intermembrane).

Belongs to the CCDC90 family. As to quaternary structure, interacts (via coiled coil regions) with MCU; the interaction is direct. Interacts with SMDT1/EMRE; the interaction is direct. Interacts with PPIF.

The protein resides in the mitochondrion inner membrane. In terms of biological role, key regulator of mitochondrial calcium uniporter (MCU) required for calcium entry into mitochondrion. Plays a direct role in uniporter-mediated calcium uptake via a direct interaction with MCU. Probably involved in the assembly of the membrane components of the uniporter complex (uniplex). The polypeptide is Mitochondrial calcium uniporter regulator 1 (Mus musculus (Mouse)).